Consider the following 422-residue polypeptide: SPbeta prophage-derived glycosyltransferase SunS (422 aa).

It belongs to the glycosyltransferase 2 family.

Its function is as follows. Transfers a hexose moiety onto 'Cys-41' of bacteriocin sublancin-168 (SunA). Accepts UDP-glucose (UDP-Glc), UDP-N-acetylglucosamine (UDP-GlcNAc), UDP-galactose (UDP-Gal), UDP-xylose (UDP-Xyl) and GDP-mannose as substrate. This Bacillus subtilis (strain 168) protein is SPbeta prophage-derived glycosyltransferase SunS (sunS).